The following is a 171-amino-acid chain: MNKITVIQGDITNIASEAIINVANSSLLGGGGVDGAIHRAGGPVILAECQAIRSRQGGCKVGEAVITGAGTLPADYVIHTVGPRWSDGRHNEDTQLKSVYLSCFKLVGHHGIKTVSFPNISTGIYGFPKKRAAAIALDVIKHCIAENRTIEKVNLVCFDAENYDLYLKLLN.

Residues 1-171 (MNKITVIQGD…NYDLYLKLLN (171 aa)) form the Macro domain. Substrate contacts are provided by residues 10 to 11 (DI), Asn24, 32 to 34 (GVD), and 121 to 125 (STGIY). Asp34 serves as the catalytic Proton acceptor.

The protein belongs to the MacroD-type family. YmdB subfamily. In terms of assembly, homodimer. Interacts with RNase III.

It catalyses the reaction 3''-O-acetyl-ADP-D-ribose + H2O = ADP-D-ribose + acetate + H(+). It carries out the reaction 2''-O-acetyl-ADP-D-ribose + H2O = ADP-D-ribose + acetate + H(+). Its function is as follows. Deacetylates O-acetyl-ADP ribose to yield ADP-ribose and free acetate. Down-regulates ribonuclease 3 (RNase III) activity. Acts by interacting directly with the region of the ribonuclease that is required for dimerization/activation. This Pantoea vagans (strain C9-1) (Pantoea agglomerans (strain C9-1)) protein is O-acetyl-ADP-ribose deacetylase 2.